The following is a 92-amino-acid chain: Movement protein (92 aa).

Residues 38-58 (VIALVVILVSVGVFYLAYTLF) form a helical membrane-spanning segment.

It belongs to the mastrevirus movement protein family. In terms of assembly, interacts with the capsid protein (CP). Part of a MP-CP-viral DNA complex.

The protein localises to the host membrane. In terms of biological role, involved in the viral transport within, and between cells. The chain is Movement protein from Phaseolus vulgaris (Kidney bean).